Here is a 130-residue protein sequence, read N- to C-terminus: MTLMDPLANALTNIRNNEIRGNVKCRITPASKLIGRVLRTMQKEGYIGEFEYVDDGRAGKFIVELEGNINHCGVIKPRHAVKKDEFEKFEKRYLPAKNFGIIIVSTPEGIMTHKEAKDRGIGGRLLAYVY.

It belongs to the universal ribosomal protein uS8 family. In terms of assembly, part of the 30S ribosomal subunit.

In terms of biological role, one of the primary rRNA binding proteins, it binds directly to 16S rRNA central domain where it helps coordinate assembly of the platform of the 30S subunit. The polypeptide is Small ribosomal subunit protein uS8 (Methanothermobacter thermautotrophicus (strain ATCC 29096 / DSM 1053 / JCM 10044 / NBRC 100330 / Delta H) (Methanobacterium thermoautotrophicum)).